The following is a 1373-amino-acid chain: MVSLRDNIEAQPLSHNRRIRKNFGHINLVADIPNLIEIQKNSYEKNFLQLNIKDSERKNKGLQSILNSIFPISDSSNIANLEFVKYEFDTPKYDVEECSQRSLSYAAPLKVTLRLSIWDIDEDTGTREIKGIKEQEVYMGDIPLMTKNGTFIINGTERVVVSQMHRSPGVFFYHDEGKVHSSGKLLYSARVIPYRGSWLDLEFDAKDVLYFRIDRKRKLYATTLLRAIGMSTEEIIKFYYNSVTYKLVKKKGWAVKFIPKHITAHRLTSDLVDADTGNVLLKAGQKITPRLAQKYCAEGINNILVAHETLIGKYLSEDLRDPASDEVLAKIGEIITSDMLNVINDLKIKNVNVLVINPQSGPYIRNTLFADKNQDREAALCDIFRVLRPGEPTNIEAAESLFYNLFFDSERYDLSEVGRIKMNSRLGLSISEEVTVLTIDDIKNIVRVLVELKDGKGIIDDIDHLGNRRVRSVGELIENQFRIGLVRMEKSVIERMSAGDVDTVMPHDLVNSKILVSVVKEFFSTSQLSQFMDQTNPLSEITHKRRLSALGPGGLSRDRAGFEVRDVHPTHYGRICPIETPEGQNIGLINSMATYARINKHGFIESPYRKVKDGRVIDEVIYLSAIEEGKYKIGQANSKVDRDGKLQGEFINCRVEGGNFVMVEPHEVDFIDVTPMQVVSVAASLIPFLENDDANRALMGSNMQRQAVPLIKTDAPFVGTGVEGVVAKDSGASVLALHDGIVEQVDSNRIVIRTLEQKIDGSPSVYIYNLLKFQKSNHNTCINQKPLVQVGHYVKKNDIIADGPSTDNGEIALGRNVLVAFLPWNGYNFEDSILISERIVKEDIFTSIHIEEFEVIARDTRLGPEEITRDIPNVSEEALRHLDEVGIIYVGAEVKAGDILVGKVTPKSESPITPEEKLLRAIFGEKAFDVKDSSLHVPSGVSGTVVEVRVFSRRGVEKDQRAIAIEKQQIEKLAKDRDDELEIIEHFVFSLLEKLLVGQVIINGLKQVKAGQTITTEMLKGLSKGQFWQLTVEDANVMNEIEQIKIHYDEKKDALNKRFATKVEKLQSGDDLPQGALKVVKVFIATKHKLQPGDKMAGRHGNKGVVSRIVPEEDMPFLEDGTVVDIVLNPLGLPSRMNIGQILETHLGWASINLAQKISTLVKEYKNKNIGIEKIKKFLLELYGENINYILERSEEEIISFCNKVGKGVYFATPVFDGAKVQDVKDMLKLAGQDPSGQVKLIDGRTGEYFDRLVTVGQKYLLKLHHLVDNKIHSRSIGPYSLVTQQPLGGKSHFGGQRFGEMECWALQAYGAAYTLQEMLTVKSDDVNGRIKTYDSIVRGENNFESGIPESFNVMIKEFRSLCLNVKLEVTSS.

The protein belongs to the RNA polymerase beta chain family. As to quaternary structure, the RNAP catalytic core consists of 2 alpha, 1 beta, 1 beta' and 1 omega subunit. When a sigma factor is associated with the core the holoenzyme is formed, which can initiate transcription.

The enzyme catalyses RNA(n) + a ribonucleoside 5'-triphosphate = RNA(n+1) + diphosphate. In terms of biological role, DNA-dependent RNA polymerase catalyzes the transcription of DNA into RNA using the four ribonucleoside triphosphates as substrates. The chain is DNA-directed RNA polymerase subunit beta from Rickettsia akari (strain Hartford).